Here is a 601-residue protein sequence, read N- to C-terminus: Glutamine--fructose-6-phosphate aminotransferase [isomerizing] (601 aa).

The active-site Nucleophile; for GATase activity is Cys2. One can recognise a Glutamine amidotransferase type-2 domain in the interval 2 to 218 (CGIVGYIGYD…DHEIVIVKKD (217 aa)). 2 SIS domains span residues 284–423 (IIND…EHGR) and 453–591 (IATD…VDKP). Residue Lys596 is the For Fru-6P isomerization activity of the active site.

In terms of assembly, homodimer.

The protein resides in the cytoplasm. It catalyses the reaction D-fructose 6-phosphate + L-glutamine = D-glucosamine 6-phosphate + L-glutamate. Functionally, catalyzes the first step in hexosamine metabolism, converting fructose-6P into glucosamine-6P using glutamine as a nitrogen source. The sequence is that of Glutamine--fructose-6-phosphate aminotransferase [isomerizing] from Staphylococcus aureus (strain COL).